A 418-amino-acid chain; its full sequence is Probable cysteine desulfurase 2 (418 aa).

Residue lysine 234 is modified to N6-(pyridoxal phosphate)lysine. Cysteine 374 serves as the catalytic Cysteine persulfide intermediate.

The protein belongs to the class-V pyridoxal-phosphate-dependent aminotransferase family. Csd subfamily. It depends on pyridoxal 5'-phosphate as a cofactor.

It carries out the reaction (sulfur carrier)-H + L-cysteine = (sulfur carrier)-SH + L-alanine. In terms of biological role, catalyzes the removal of elemental sulfur and selenium atoms from L-cysteine, L-cystine, L-selenocysteine, and L-selenocystine to produce L-alanine. In Mycobacterium leprae (strain TN), this protein is Probable cysteine desulfurase 2 (csd2).